The primary structure comprises 234 residues: Phosphatidylcholine synthase (234 aa).

The Cytoplasmic portion of the chain corresponds to 1–3; that stretch reads MKN. Residues 4-24 traverse the membrane as a helical segment; that stretch reads INLILAWLVHIFTASGLIVGL. Residues 25-26 lie on the Periplasmic side of the membrane; sequence YS. A helical membrane pass occupies residues 27–47; sequence IISIVNGNYSLLLKLTVIGLI. The Cytoplasmic portion of the chain corresponds to 48-75; the sequence is IDGIDGTMARKLKVKELIPEIDGTLLDN. The helical transmembrane segment at 76 to 96 threads the bilayer; the sequence is ITDYINYTFIPVIFFYLGEFI. Residues 97-98 are Periplasmic-facing; sequence EE. Residues 99-116 form a helical membrane-spanning segment; that stretch reads KYKVAICIGILLSSAYQF. Residues 117-126 lie on the Cytoplasmic side of the membrane; it reads SRTDAKTNDN. A helical membrane pass occupies residues 127 to 147; it reads YFRGFPSLWNLFVILNIIFKM. Residues 148-149 are Periplasmic-facing; that stretch reads EQ. A helical transmembrane segment spans residues 150–170; it reads ITNLITMSICIITSFIPIKFI. Residues 171 to 180 lie on the Cytoplasmic side of the membrane; that stretch reads YPSKTKELRK. The chain crosses the membrane as a helical span at residues 181–201; that stretch reads ITIPITIISCLIFVVSIFSEL. Residues 202–207 lie on the Periplasmic side of the membrane; it reads STTALK. A helical membrane pass occupies residues 208-228; that stretch reads MAKTVLILYFAYLTLASIYLT. The Cytoplasmic portion of the chain corresponds to 229–234; it reads YKTRNR.

This sequence belongs to the CDP-alcohol phosphatidyltransferase class-I family. It depends on Mn(2+) as a cofactor.

The protein localises to the cell inner membrane. The enzyme catalyses a CDP-1,2-diacyl-sn-glycerol + choline = a 1,2-diacyl-sn-glycero-3-phosphocholine + CMP + H(+). Its function is as follows. Condenses choline with CDP-diglyceride to produce phosphatidylcholine and CMP. This is Phosphatidylcholine synthase from Borreliella burgdorferi (strain ATCC 35210 / DSM 4680 / CIP 102532 / B31) (Borrelia burgdorferi).